The primary structure comprises 1116 residues: Error-prone DNA polymerase 1 (1116 aa).

The protein belongs to the DNA polymerase type-C family. DnaE2 subfamily.

Its subcellular location is the cytoplasm. The enzyme catalyses DNA(n) + a 2'-deoxyribonucleoside 5'-triphosphate = DNA(n+1) + diphosphate. Functionally, DNA polymerase involved in damage-induced mutagenesis and translesion synthesis (TLS). It is not the major replicative DNA polymerase. This chain is Error-prone DNA polymerase 1, found in Rhizobium meliloti (strain 1021) (Ensifer meliloti).